Reading from the N-terminus, the 710-residue chain is Exocyst complex component 5 (710 aa).

A coiled-coil region spans residues 44 to 96; it reads DTFIQTIKDLKILQEKQQSKCERLEESLRQEKESHAKKIAKLQERHQTAIDVF.

Belongs to the SEC10 family. The exocyst complex is composed of Sec3/Exoc1, Sec5/Exoc2, Sec6/Exoc3, Sec8/Exoc4, Sec10/Exoc5, Sec15/Exoc6, Exo70/Exoc7 and Exo84/Exoc8.

Component of the exocyst complex involved in the docking of exocytic vesicles with fusion sites on the plasma membrane. This Drosophila melanogaster (Fruit fly) protein is Exocyst complex component 5.